The primary structure comprises 55 residues: Ribulose bisphosphate carboxylase large chain (55 aa).

Residue His-18 is the Proton acceptor of the active site. 2 residues coordinate substrate: Arg-19 and His-27.

It belongs to the RuBisCO large chain family. Type I subfamily. As to quaternary structure, heterohexadecamer of 8 large chains and 8 small chains; disulfide-linked. The disulfide link is formed within the large subunit homodimers. It depends on Mg(2+) as a cofactor. Post-translationally, the disulfide bond which can form in the large chain dimeric partners within the hexadecamer appears to be associated with oxidative stress and protein turnover.

The protein resides in the plastid. Its subcellular location is the chloroplast. The catalysed reaction is 2 (2R)-3-phosphoglycerate + 2 H(+) = D-ribulose 1,5-bisphosphate + CO2 + H2O. The enzyme catalyses D-ribulose 1,5-bisphosphate + O2 = 2-phosphoglycolate + (2R)-3-phosphoglycerate + 2 H(+). In terms of biological role, ruBisCO catalyzes two reactions: the carboxylation of D-ribulose 1,5-bisphosphate, the primary event in carbon dioxide fixation, as well as the oxidative fragmentation of the pentose substrate in the photorespiration process. Both reactions occur simultaneously and in competition at the same active site. In Vitis sp. (Grape), this protein is Ribulose bisphosphate carboxylase large chain.